The following is a 128-amino-acid chain: Large ribosomal subunit protein bL12 (128 aa).

This sequence belongs to the bacterial ribosomal protein bL12 family. In terms of assembly, homodimer. Part of the ribosomal stalk of the 50S ribosomal subunit. Forms a multimeric L10(L12)X complex, where L10 forms an elongated spine to which 2 to 4 L12 dimers bind in a sequential fashion. Binds GTP-bound translation factors.

Functionally, forms part of the ribosomal stalk which helps the ribosome interact with GTP-bound translation factors. Is thus essential for accurate translation. This Synechococcus sp. (strain ATCC 27144 / PCC 6301 / SAUG 1402/1) (Anacystis nidulans) protein is Large ribosomal subunit protein bL12.